The primary structure comprises 313 residues: Ribosomal RNA small subunit methyltransferase H (313 aa).

S-adenosyl-L-methionine is bound by residues 35 to 37, Asp-55, Phe-79, Asp-100, and Gln-107; that span reads GGH.

The protein belongs to the methyltransferase superfamily. RsmH family.

Its subcellular location is the cytoplasm. It catalyses the reaction cytidine(1402) in 16S rRNA + S-adenosyl-L-methionine = N(4)-methylcytidine(1402) in 16S rRNA + S-adenosyl-L-homocysteine + H(+). Functionally, specifically methylates the N4 position of cytidine in position 1402 (C1402) of 16S rRNA. This chain is Ribosomal RNA small subunit methyltransferase H, found in Burkholderia pseudomallei (strain K96243).